Consider the following 384-residue polypeptide: Carbamoyl phosphate synthase small chain (384 aa).

The segment at 1 to 192 (MIKKIPAILV…LADRNREKIY (192 aa)) is CPSase. L-glutamine contacts are provided by Ser51, Gly244, and Gly246. In terms of domain architecture, Glutamine amidotransferase type-1 spans 196 to 382 (KVIVIDFGVK…IEIMKQFRKE (187 aa)). Cys272 functions as the Nucleophile in the catalytic mechanism. L-glutamine-binding residues include Met273, Gln276, Asn312, Gly314, and Phe315. Residues His355 and Glu357 contribute to the active site.

The protein belongs to the CarA family. In terms of assembly, composed of two chains; the small (or glutamine) chain promotes the hydrolysis of glutamine to ammonia, which is used by the large (or ammonia) chain to synthesize carbamoyl phosphate. Tetramer of heterodimers (alpha,beta)4.

Its subcellular location is the plastid. The protein localises to the chloroplast. It carries out the reaction hydrogencarbonate + L-glutamine + 2 ATP + H2O = carbamoyl phosphate + L-glutamate + 2 ADP + phosphate + 2 H(+). The enzyme catalyses L-glutamine + H2O = L-glutamate + NH4(+). It functions in the pathway amino-acid biosynthesis; L-arginine biosynthesis; carbamoyl phosphate from bicarbonate: step 1/1. It participates in pyrimidine metabolism; UMP biosynthesis via de novo pathway; (S)-dihydroorotate from bicarbonate: step 1/3. Functionally, small subunit of the glutamine-dependent carbamoyl phosphate synthetase (CPSase). CPSase catalyzes the formation of carbamoyl phosphate from the ammonia moiety of glutamine, carbonate, and phosphate donated by ATP, constituting the first step of 2 biosynthetic pathways, one leading to arginine and/or urea and the other to pyrimidine nucleotides. The small subunit (glutamine amidotransferase) binds and cleaves glutamine to supply the large subunit with the substrate ammonia. This chain is Carbamoyl phosphate synthase small chain, found in Porphyra purpurea (Red seaweed).